Consider the following 211-residue polypeptide: Urease accessory protein UreF (211 aa).

A disordered region spans residues 68 to 93 (LAPDGADRETDARTPSPAARDASRSQ).

It belongs to the UreF family. In terms of assembly, ureD, UreF and UreG form a complex that acts as a GTP-hydrolysis-dependent molecular chaperone, activating the urease apoprotein by helping to assemble the nickel containing metallocenter of UreC. The UreE protein probably delivers the nickel.

The protein resides in the cytoplasm. Its function is as follows. Required for maturation of urease via the functional incorporation of the urease nickel metallocenter. The protein is Urease accessory protein UreF of Mycobacterium marinum (strain ATCC BAA-535 / M).